The sequence spans 647 residues: Pollen receptor-like kinase 2 (647 aa).

Positions 1–21 (MESKCLMFVSIVSVFFMVVNG) are cleaved as a signal peptide. 5 LRR repeats span residues 87-109 (LNSLRSLSFINNKFKGPFPEFKK), 110-134 (LVALKSLYLSNNQFDLEIPKDAFDG), 136-159 (GWLKKLHLEQNNFIGEIPTSLVKS), 161-183 (KLIELRLDGNRFTGQIPEFRHHP), and 185-203 (MLNLSNNALAGQIPNSFST). A helical membrane pass occupies residues 248 to 268 (IVAAAVAALAASLIIIGVVIF). The Protein kinase domain occupies 338 to 613 (KASAEILGSG…EAVEKMEDLM (276 aa)). Ser340 is modified (phosphoserine). ATP-binding positions include 344–352 (LGSGCFGAS) and Lys366. A Phosphoserine modification is found at Ser418. The residue at position 438 (Thr438) is a Phosphothreonine. Tyr508 carries the post-translational modification Phosphotyrosine. The disordered stretch occupies residues 620-647 (DDDFYSTYASEADGRSSRGLSSEGINLS). The segment covering 637 to 647 (RGLSSEGINLS) has biased composition (polar residues).

Belongs to the protein kinase superfamily. Ser/Thr protein kinase family. Part of a complex containing ROPGEF1 and ARAC11/ROP1. The interaction between PRK2, ROPGEF1 and ARAC11/ROP1 is phosphorylation-independent. Interacts with ROPGEF12 (via C-terminus). Interacts with ROPGEF1 (via PRONE domain). As to expression, expressed in pollen and/or in flowers, but not in leaves. Expressed in pollen tube.

Its subcellular location is the cell membrane. It catalyses the reaction L-seryl-[protein] + ATP = O-phospho-L-seryl-[protein] + ADP + H(+). It carries out the reaction L-threonyl-[protein] + ATP = O-phospho-L-threonyl-[protein] + ADP + H(+). Its activity is regulated as follows. The phosphorylation activity is calcium-independent. Its function is as follows. Receptor-like kinase involved in the control of pollen germination and pollen tube polar growth. Phosphorylates ROPGEF1 in its C-terminal region, releasing its auto-inhibition, and thereby activating the ROP1 signaling pathway. May act as a scaffolding protein, recruiting ROPGEF12 to the plasma membrane by binding to its C-terminal domain. Phosphorylates ROPGEF12, releasing its auto-inhibition. In Arabidopsis thaliana (Mouse-ear cress), this protein is Pollen receptor-like kinase 2.